The chain runs to 774 residues: 1,4-alpha-glucan branching enzyme GlgB 1 (774 aa).

Positions 1 to 66 (MTPRPSSSGP…AEVAVSPAPD (66 aa)) are disordered. The span at 29-40 (KPAKAAKKKAPR) shows a compositional bias: basic residues. Over residues 41–55 (RTTASANASATTSVS) the composition is skewed to low complexity. The active-site Nucleophile is D457. E510 acts as the Proton donor in catalysis. A disordered region spans residues 748–774 (YGGGDVVNPDPVKPEPQGGTAARRASG).

This sequence belongs to the glycosyl hydrolase 13 family. GlgB subfamily. In terms of assembly, monomer.

It catalyses the reaction Transfers a segment of a (1-&gt;4)-alpha-D-glucan chain to a primary hydroxy group in a similar glucan chain.. It participates in glycan biosynthesis; glycogen biosynthesis. Its function is as follows. Catalyzes the formation of the alpha-1,6-glucosidic linkages in glycogen by scission of a 1,4-alpha-linked oligosaccharide from growing alpha-1,4-glucan chains and the subsequent attachment of the oligosaccharide to the alpha-1,6 position. The protein is 1,4-alpha-glucan branching enzyme GlgB 1 (glgB1) of Streptomyces coelicolor (strain ATCC BAA-471 / A3(2) / M145).